A 287-amino-acid polypeptide reads, in one-letter code: Elongation factor Ts (287 aa).

Positions 79–82 are involved in Mg(2+) ion dislocation from EF-Tu; the sequence is TDFV.

The protein belongs to the EF-Ts family.

It localises to the cytoplasm. Functionally, associates with the EF-Tu.GDP complex and induces the exchange of GDP to GTP. It remains bound to the aminoacyl-tRNA.EF-Tu.GTP complex up to the GTP hydrolysis stage on the ribosome. In Anaplasma phagocytophilum (strain HZ), this protein is Elongation factor Ts.